A 150-amino-acid chain; its full sequence is UPF0178 protein BceJ2315_16760 (150 aa).

This sequence belongs to the UPF0178 family.

The polypeptide is UPF0178 protein BceJ2315_16760 (Burkholderia cenocepacia (strain ATCC BAA-245 / DSM 16553 / LMG 16656 / NCTC 13227 / J2315 / CF5610) (Burkholderia cepacia (strain J2315))).